A 23-amino-acid polypeptide reads, in one-letter code: RDFTHTIIDNSDLFSESRNTRLG.

The protein localises to the secreted. The protein resides in the nematocyst. In terms of biological role, nephrotoxin. When injected intravenously in rats, causes severe destructive glomerular changes. At 24 hours post-injection partial disruption of the glomerular basement membrane, massive thrombus formation in glomerular capillaries, severe mesangiolysis and infiltrating cells were observed in the majority of glomeruli. This is Nephrotoxin PsTX-115 from Phyllodiscus semoni (Night anemone).